The following is a 193-amino-acid chain: MAAIRKKLVIVGDGACGKTCLLIVFSKDQFPEVYVPTVFENYVADIEVDGKQVELALWDTAGQEDYDRLRPLSYPDTDVILMCFSIDSPDSLENIPEKWTPEVKHFCPNVPIILVGNKKDLRNDEHTRRELAKMKQEPVKPEEGRDMANRIGAFGYMECSAKTKDGVREVFEMATRAALQARRGKKKSGCLVL.

Residues 12 to 19 and 30 to 37 contribute to the GTP site; these read GDGACGKT and FPEVYVPT. An Effector region motif is present at residues 34–42; it reads YVPTVFENY. Asn-41 is subject to (Microbial infection) ADP-ribosylasparagine; by botulinum toxin. GTP-binding positions include 59-63 and 117-120; these read DTAGQ and NKKD. Residues 61-78 form a switch II region; involved in RAP1GDS1 isoform 2 binding region; that stretch reads AGQEDYDRLRPLSYPDTD. At Gln-63 the chain carries 5-glutamyl serotonin. Residue Lys-135 forms a Glycyl lysine isopeptide (Lys-Gly) (interchain with G-Cter in ubiquitin) linkage. 160 to 162 provides a ligand contact to GTP; it reads SAK. Position 188 is a phosphoserine; by PKG/PRKG1 (Ser-188). Residue Cys-190 is modified to Cysteine methyl ester. Cys-190 carries the S-geranylgeranyl cysteine lipid modification. Residues 191-193 constitute a propeptide, removed in mature form; the sequence is LVL.

It belongs to the small GTPase superfamily. Rho family. In terms of assembly, interacts with ARHGEF28. Interacts (via GTP-bound form) with RIPOR1 (via N-terminus); this interaction links RHOA to STK24 and STK26 kinases. Interacts with RIPOR2 (via active GTP- or inactive GDP-bound forms) isoform 1 and isoform 2; these interactions are direct, block the loading of GTP to RHOA and decrease upon chemokine CCL19 stimulation in primary T lymphocytes. Binds PRKCL1, ROCK1 and ROCK2. Interacts with ARHGEF2, ARHGEF3, NET1 and RTKN. Interacts with PLCE1 and AKAP13. Interacts with DIAPH1. Interacts (in the constitutively activated, GTP-bound form) with DGKQ. Interacts with RACK1; enhances RHOA activation. Interacts with PKP4; the interaction is detected at the midbody. Interacts (GTP-bound form preferentially) with PKN2; the interaction stimulates autophosphorylation and phosphorylation of PKN2. Interacts with ARHGDIA; this interaction inactivates and stabilizes RHOA. Interacts with ARHGDIB. Interacts (GTP-bound form) with KCNA2 (via cytoplasmic N-terminal domain). Interacts (GTP-bound form) with ECT2; the interaction results in allosteric activation of ECT2. Interacts with RAP1GDS1; the interaction is direct and in a 1:1 stoichiometry. Mg(2+) serves as cofactor. Phosphorylation by PRKG1 at Ser-188 inactivates RHOA signaling. Phosphorylation by SLK at Ser-188 in response to AGTR2 activation. Post-translationally, ubiquitinated by the BCR(KCTD13) and BCR(TNFAIP1) E3 ubiquitin ligase complexes, leading to its degradation by the proteasome, thereby regulating the actin cytoskeleton and synaptic transmission in neurons. Ubiquitinated at Lys-135 in a FBXL19-mediated manner; leading to proteasomal degradation. In terms of processing, serotonylation of Gln-63 by TGM2 during activation and aggregation of platelets leads to constitutive activation of GTPase activity.

It is found in the cell membrane. It localises to the cytoplasm. The protein localises to the cytoskeleton. The protein resides in the cleavage furrow. Its subcellular location is the cell cortex. It is found in the midbody. It localises to the cell projection. The protein localises to the lamellipodium. The protein resides in the dendrite. Its subcellular location is the nucleus. The enzyme catalyses GTP + H2O = GDP + phosphate + H(+). With respect to regulation, regulated by guanine nucleotide exchange factors (GEFs) which promote the exchange of bound GDP for free GTP, GTPase activating proteins (GAPs) which increase the GTP hydrolysis activity and GDP dissociation inhibitors which inhibit the dissociation of the nucleotide from the GTPase. Activated by GEFs such as ARHGEF2, ARHGEF3, ARHGEF28 and BCR. Inhibited by GAPs such as ARHGAP30. Inhibited by GDP dissociation inhibitors such as ARHGDIA. Small GTPase which cycles between an active GTP-bound and an inactive GDP-bound state. Mainly associated with cytoskeleton organization, in active state binds to a variety of effector proteins to regulate cellular responses such as cytoskeletal dynamics, cell migration and cell cycle. Regulates a signal transduction pathway linking plasma membrane receptors to the assembly of focal adhesions and actin stress fibers. Involved in a microtubule-dependent signal that is required for the myosin contractile ring formation during cell cycle cytokinesis. Plays an essential role in cleavage furrow formation. Required for the apical junction formation of keratinocyte cell-cell adhesion. Essential for the SPATA13-mediated regulation of cell migration and adhesion assembly and disassembly. The MEMO1-RHOA-DIAPH1 signaling pathway plays an important role in ERBB2-dependent stabilization of microtubules at the cell cortex. It controls the localization of APC and CLASP2 to the cell membrane, via the regulation of GSK3B activity. In turn, membrane-bound APC allows the localization of the MACF1 to the cell membrane, which is required for microtubule capture and stabilization. Regulates KCNA2 potassium channel activity by reducing its location at the cell surface in response to CHRM1 activation; promotes KCNA2 endocytosis. Acts as an allosteric activator of guanine nucleotide exchange factor ECT2 by binding in its activated GTP-bound form to the PH domain of ECT2 which stimulates the release of PH inhibition and promotes the binding of substrate RHOA to the ECT2 catalytic center. May be an activator of PLCE1. In neurons, involved in the inhibition of the initial spine growth. Upon activation by CaMKII, modulates dendritic spine structural plasticity by relaying CaMKII transient activation to synapse-specific, long-term signaling. Acts as a regulator of platelet alpha-granule release during activation and aggregation of platelets. When activated by DAAM1 may signal centrosome maturation and chromosomal segregation during cell division. May also be involved in contractile ring formation during cytokinesis. The chain is Transforming protein RhoA (RHOA) from Bos taurus (Bovine).